A 212-amino-acid polypeptide reads, in one-letter code: Cytochrome c biogenesis ATP-binding export protein CcmA (212 aa).

The ABC transporter domain maps to 7 to 209 (LSLQNLSCQR…HLQKLNLAAY (203 aa)). ATP is bound at residue 39–46 (GHNGIGKT).

The protein belongs to the ABC transporter superfamily. CcmA exporter (TC 3.A.1.107) family. In terms of assembly, the complex is composed of two ATP-binding proteins (CcmA) and two transmembrane proteins (CcmB).

It localises to the cell inner membrane. The catalysed reaction is heme b(in) + ATP + H2O = heme b(out) + ADP + phosphate + H(+). Part of the ABC transporter complex CcmAB involved in the biogenesis of c-type cytochromes; once thought to export heme, this seems not to be the case, but its exact role is uncertain. Responsible for energy coupling to the transport system. In Haemophilus influenzae (strain ATCC 51907 / DSM 11121 / KW20 / Rd), this protein is Cytochrome c biogenesis ATP-binding export protein CcmA.